The following is a 181-amino-acid chain: Oligoribonuclease (181 aa).

In terms of domain architecture, Exonuclease spans 8–171; the sequence is LIWIDLEMTG…LDIQESIAEL (164 aa). The active site involves tyrosine 129.

It belongs to the oligoribonuclease family.

The protein localises to the cytoplasm. 3'-to-5' exoribonuclease specific for small oligoribonucleotides. The chain is Oligoribonuclease from Shewanella amazonensis (strain ATCC BAA-1098 / SB2B).